The chain runs to 91 residues: Potassium channel toxin MeuTXK-beta-2 (91 aa).

The first 19 residues, 1 to 19 (MQRNLVVLLFLGMVALSSC), serve as a signal peptide directing secretion. The BetaSPN-type CS-alpha/beta domain maps to 54-91 (QFGCSAYQGYCDDHCQDIEKKEGFCHGFKCKCGIPMGF). Disulfide bonds link C57-C78, C64-C83, and C68-C85.

Belongs to the long chain scorpion toxin family. Class 1 subfamily. In terms of tissue distribution, expressed by the venom gland.

The protein localises to the secreted. Has a low affinity binding to potassium channels of rat brain synaptosomes. Displays weak antibacterial activity against Stenotrophomonas sp. Strongly inhibits the development of the Plasmodium berghei ookinetes. Displays slight hemolytic effect on mouse erythrocytes. Induces cytolysis on Xenopus oocytes at high concentrations. Is not toxic towards mice and towards the insect Tenebrio molitor. This is Potassium channel toxin MeuTXK-beta-2 from Mesobuthus eupeus (Lesser Asian scorpion).